Reading from the N-terminus, the 333-residue chain is Sodium/bile acid cotransporter 7 (333 aa).

Over 1 to 10 (MGLLERLRKE) the chain is Cytoplasmic. Residues 11–31 (WFIAGIALVIAAARLEPAVGV) form a helical membrane-spanning segment. At 32-37 (KGGPLK) the chain is on the extracellular side. Residues 38–58 (PEITITYIAVSAIFFNSGLSL) form a helical membrane-spanning segment. Residues 59–71 (KTEELTSALMHVK) lie on the Cytoplasmic side of the membrane. A helical membrane pass occupies residues 72-92 (LHLFVQIFTLVFFPTAIWLFL). The Extracellular portion of the chain corresponds to 93-103 (QLLSITPINEW). The chain crosses the membrane as a helical span at residues 104–124 (LLKGLQTVGCMPPPVSSAVIL). The Cytoplasmic segment spans residues 125-126 (TK). A helical transmembrane segment spans residues 127–147 (AVGGNEAAAIFNSAFGSFLLG). At 148–151 (SSSS) the chain is on the extracellular side. The chain crosses the membrane as a helical span at residues 152-172 (VPFTSIFSQLFMTVVVPLIIG). The Cytoplasmic portion of the chain corresponds to 173-189 (QIVRRYIKDWLERRKPP). A helical transmembrane segment spans residues 190-210 (FGTISSCVLLMIIYTTFCDTF). Over 211-222 (ANPNIDLDKFSL) the chain is Extracellular. Residues 223–243 (IIIVFIIFSVQMSFMFLTFLF) form a helical membrane-spanning segment. At 244–258 (STRSNSGFTPADTVA) the chain is on the cytoplasmic side. Residues 259-279 (IIFCSTHKSLTLGIPMLKIVF) form a helical membrane-spanning segment. At 280–286 (AGYEHLS) the chain is on the extracellular side. A helical membrane pass occupies residues 287 to 307 (LISVPLLIYHPAQILLGSLLV). Residues 308–333 (PTIKSWMVSRQKALKLTRQPKVPVKV) lie on the Cytoplasmic side of the membrane.

This sequence belongs to the bile acid:sodium symporter (BASS) (TC 2.A.28) family.

It is found in the cell membrane. Its subcellular location is the endoplasmic reticulum membrane. It localises to the golgi apparatus membrane. Functionally, involved in teeth and skeletal development. Has an essential role in the biosynthesis and trafficking of glycosaminoglycans and glycoproteins to produce a proper functioning extracellular matrix. Required for extracellular matrix mineralization. Also involved in the regulation of cellular calcium homeostasis. Does not show transport activity towards bile acids or steroid sulfates. The protein is Sodium/bile acid cotransporter 7 (SLC10A7) of Gallus gallus (Chicken).